The sequence spans 471 residues: Kynurenine 3-monooxygenase (471 aa).

FAD-binding positions include V19, 37-40 (YESR), and A57. L-kynurenine contacts are provided by R85 and Y99. FAD contacts are provided by residues R111, L136, T172, D304, and 317–318 (MN). The L-kynurenine site is built by N363 and Y398. A run of 2 helical transmembrane segments spans residues 385 to 404 (CLHT…VTFS) and 425 to 445 (ALFF…TGPT).

It belongs to the aromatic-ring hydroxylase family. KMO subfamily. FAD serves as cofactor.

The protein resides in the mitochondrion outer membrane. It catalyses the reaction L-kynurenine + NADPH + O2 + H(+) = 3-hydroxy-L-kynurenine + NADP(+) + H2O. It participates in cofactor biosynthesis; NAD(+) biosynthesis; quinolinate from L-kynurenine: step 1/3. Its function is as follows. Catalyzes the hydroxylation of L-kynurenine (L-Kyn) to form 3-hydroxy-L-kynurenine (L-3OHKyn). Required for synthesis of quinolinic acid, a neurotoxic NMDA receptor antagonist and potential endogenous inhibitor of NMDA receptor signaling in axonal targeting, synaptogenesis and apoptosis during brain development. Quinolinic acid may also affect NMDA receptor signaling in pancreatic beta cells, osteoblasts, myocardial cells, and the gastrointestinal tract. This is Kynurenine 3-monooxygenase from Sus scrofa (Pig).